Reading from the N-terminus, the 34-residue chain is Photosystem II reaction center protein M (34 aa).

A helical transmembrane segment spans residues 5–25 (ILAFIATALFILVPTAFLLII).

Belongs to the PsbM family. PSII is composed of 1 copy each of membrane proteins PsbA, PsbB, PsbC, PsbD, PsbE, PsbF, PsbH, PsbI, PsbJ, PsbK, PsbL, PsbM, PsbT, PsbX, PsbY, PsbZ, Psb30/Ycf12, at least 3 peripheral proteins of the oxygen-evolving complex and a large number of cofactors. It forms dimeric complexes.

It is found in the plastid. It localises to the chloroplast thylakoid membrane. One of the components of the core complex of photosystem II (PSII). PSII is a light-driven water:plastoquinone oxidoreductase that uses light energy to abstract electrons from H(2)O, generating O(2) and a proton gradient subsequently used for ATP formation. It consists of a core antenna complex that captures photons, and an electron transfer chain that converts photonic excitation into a charge separation. This subunit is found at the monomer-monomer interface. In Coffea arabica (Arabian coffee), this protein is Photosystem II reaction center protein M.